The sequence spans 317 residues: Carbonic anhydrase 5B, mitochondrial (317 aa).

The transit peptide at 1–33 directs the protein to the mitochondrion; it reads MTVMSHLRVSLQVSSCTLLWRRFRVPRLVPLRS. In terms of domain architecture, Alpha-carbonic anhydrase spans 37 to 296; that stretch reads YTCTYRTRNR…LMNRTVRSSF (260 aa). Zn(2+) is bound by residues H130, H132, and H155. 235-236 provides a ligand contact to substrate; it reads TT.

It belongs to the alpha-carbonic anhydrase family. Requires Zn(2+) as cofactor.

Its subcellular location is the mitochondrion. The enzyme catalyses hydrogencarbonate + H(+) = CO2 + H2O. Functionally, mitochondrial carbonic anhydrase that catalyzes the reversible conversion of carbon dioxide to bicarbonate/HCO3. This chain is Carbonic anhydrase 5B, mitochondrial (Ca5b), found in Rattus norvegicus (Rat).